The sequence spans 851 residues: DNA mismatch repair protein MutS (851 aa).

Residue 602-609 coordinates ATP; it reads GPNMSGKS.

Belongs to the DNA mismatch repair MutS family.

In terms of biological role, this protein is involved in the repair of mismatches in DNA. It is possible that it carries out the mismatch recognition step. This protein has a weak ATPase activity. This Streptococcus equi subsp. equi (strain 4047) protein is DNA mismatch repair protein MutS.